Reading from the N-terminus, the 261-residue chain is Pyridoxine-5'-phosphate oxidase (261 aa).

Arg-42–Pro-45 contributes to the pyridoxal 5'-phosphate binding site. Arg-95 to Leu-98 is an FMN binding site. Lys-100 serves as a coordination point for pyridoxal 5'-phosphate. FMN-binding positions include Phe-110–Thr-111, Arg-116–Lys-117, and Gln-139. Residues Tyr-157, Arg-161, and Ser-165 each contribute to the pyridoxal 5'-phosphate site. FMN-binding positions include Gln-174–Ser-175 and Trp-219. Arg-225 to His-227 contacts pyridoxal 5'-phosphate. Arg-229 provides a ligand contact to FMN. The residue at position 238 (Thr-238) is a Phosphothreonine. Residue Ser-241 is modified to Phosphoserine.

The protein belongs to the pyridoxamine 5'-phosphate oxidase family. Homodimer. FMN is required as a cofactor.

The catalysed reaction is pyridoxamine 5'-phosphate + O2 + H2O = pyridoxal 5'-phosphate + H2O2 + NH4(+). It carries out the reaction pyridoxine 5'-phosphate + O2 = pyridoxal 5'-phosphate + H2O2. It participates in cofactor metabolism; pyridoxal 5'-phosphate salvage; pyridoxal 5'-phosphate from pyridoxamine 5'-phosphate: step 1/1. Its pathway is cofactor metabolism; pyridoxal 5'-phosphate salvage; pyridoxal 5'-phosphate from pyridoxine 5'-phosphate: step 1/1. In terms of biological role, catalyzes the oxidation of either pyridoxine 5'-phosphate (PNP) or pyridoxamine 5'-phosphate (PMP) into pyridoxal 5'-phosphate (PLP). This is Pyridoxine-5'-phosphate oxidase (PNPO) from Bos taurus (Bovine).